The following is a 261-amino-acid chain: tRNA (guanine-N(7)-)-methyltransferase (261 aa).

Residues Glu-75, Glu-100, Asp-127, and Asp-150 each contribute to the S-adenosyl-L-methionine site. Asp-150 is an active-site residue. Lys-154 is a substrate binding site. The interaction with RNA stretch occupies residues 156 to 161 (RHNKRR). Residues Asp-186 and 223–226 (THFE) contribute to the substrate site.

Belongs to the class I-like SAM-binding methyltransferase superfamily. TrmB family.

It carries out the reaction guanosine(46) in tRNA + S-adenosyl-L-methionine = N(7)-methylguanosine(46) in tRNA + S-adenosyl-L-homocysteine. It participates in tRNA modification; N(7)-methylguanine-tRNA biosynthesis. In terms of biological role, catalyzes the formation of N(7)-methylguanine at position 46 (m7G46) in tRNA. This is tRNA (guanine-N(7)-)-methyltransferase from Xanthomonas campestris pv. campestris (strain 8004).